The primary structure comprises 419 residues: Transcriptional regulator Myc-A (419 aa).

The short motif at 78–86 (EMVTEFLGG) is the 9aaTAD element. 3 disordered regions span residues 141 to 166 (ALSS…HGSL), 206 to 274 (SPCQ…HYSP), and 319 to 344 (NNRK…NVLE). Positions 226–245 (ESEEEPEDEDEDCDEEEEID) are enriched in acidic residues. Positions 248 to 261 (TVEKRQSASKRVES) are enriched in basic and acidic residues. Positions 319-328 (NNRKCASPRS) are enriched in polar residues. Residues 335-387 (DKRKTHNVLERQRRNELKLSFFALRDQVPEVASNEKAPKVVILKKATEYAISL) enclose the bHLH domain. The interval 387 to 415 (LQEDERRLIRETEQLKYRKEQLKQRLQQL) is leucine-zipper.

In terms of assembly, efficient DNA binding requires dimerization with another bHLH protein. Binds DNA as a heterodimer with MAX.

It localises to the nucleus. Functionally, transcription factor that binds DNA in a non-specific manner, yet also specifically recognizes the core sequence 5'-CAC[GA]TG-3'. Activates the transcription of growth-related genes. The sequence is that of Transcriptional regulator Myc-A (myc-a) from Xenopus laevis (African clawed frog).